Reading from the N-terminus, the 369-residue chain is Flagellar P-ring protein (369 aa).

The N-terminal stretch at 1 to 23 (MIKQFAVSLLLVLLTLVTTTASA) is a signal peptide.

Belongs to the FlgI family. In terms of assembly, the basal body constitutes a major portion of the flagellar organelle and consists of four rings (L,P,S, and M) mounted on a central rod.

It localises to the periplasm. The protein resides in the bacterial flagellum basal body. Assembles around the rod to form the L-ring and probably protects the motor/basal body from shearing forces during rotation. The polypeptide is Flagellar P-ring protein (Photorhabdus laumondii subsp. laumondii (strain DSM 15139 / CIP 105565 / TT01) (Photorhabdus luminescens subsp. laumondii)).